The chain runs to 327 residues: Interleukin-12 subunit beta (327 aa).

An N-terminal signal peptide occupies residues 1-22; that stretch reads MCHQKLTISWFAMVLLVSPLMA. The region spanning 23–106 is the Ig-like C2-type domain; it reads IWELEKDVYV…LSHSRLLLHK (84 aa). The cysteines at positions 50 and 90 are disulfide-linked. 4 N-linked (GlcNAc...) asparagine glycosylation sites follow: Asn-125, Asn-135, Asn-223, and Asn-315. The Fibronectin type-III domain maps to 238-327; that stretch reads PPKNLQLKPL…WSEWASVSCN (90 aa).

Belongs to the IL-12B family. As to quaternary structure, heterodimer with IL12A; disulfide-linked. The heterodimer is known as interleukin IL-12. Heterodimer with IL23A; disulfide-linked. The heterodimer is known as interleukin IL-23. Also secreted as a monomer. Interacts with NBR1; this interaction promotes IL-12 secretion.

It localises to the secreted. Cytokine that can act as a growth factor for activated T and NK cells, enhance the lytic activity of NK/lymphokine-activated killer cells, and stimulate the production of IFN-gamma by resting PBMC. Its function is as follows. Associates with IL23A to form the IL-23 interleukin, a heterodimeric cytokine which functions in innate and adaptive immunity. IL-23 may constitute with IL-17 an acute response to infection in peripheral tissues. IL-23 binds to a heterodimeric receptor complex composed of IL12RB1 and IL23R, activates the Jak-Stat signaling cascade, stimulates memory rather than naive T-cells and promotes production of pro-inflammatory cytokines. IL-23 induces autoimmune inflammation and thus may be responsible for autoimmune inflammatory diseases and may be important for tumorigenesis. The chain is Interleukin-12 subunit beta (IL12B) from Sigmodon hispidus (Hispid cotton rat).